Consider the following 35-residue polypeptide: Photosystem II reaction center protein M (35 aa).

Residues 5-25 (ILGLIATALFILIPTSFLIIL) form a helical membrane-spanning segment.

This sequence belongs to the PsbM family. PSII is composed of 1 copy each of membrane proteins PsbA, PsbB, PsbC, PsbD, PsbE, PsbF, PsbH, PsbI, PsbJ, PsbK, PsbL, PsbM, PsbT, PsbX, PsbY, PsbZ, Psb30/Ycf12, at least 3 peripheral proteins of the oxygen-evolving complex and a large number of cofactors. It forms dimeric complexes.

The protein resides in the plastid. The protein localises to the chloroplast thylakoid membrane. In terms of biological role, one of the components of the core complex of photosystem II (PSII). PSII is a light-driven water:plastoquinone oxidoreductase that uses light energy to abstract electrons from H(2)O, generating O(2) and a proton gradient subsequently used for ATP formation. It consists of a core antenna complex that captures photons, and an electron transfer chain that converts photonic excitation into a charge separation. This subunit is found at the monomer-monomer interface. The protein is Photosystem II reaction center protein M of Oltmannsiellopsis viridis (Marine flagellate).